An 84-amino-acid polypeptide reads, in one-letter code: Beta-defensin 119 (84 aa).

Residues 1–21 (MKLLYLFLAILLAIEEPVISG) form the signal peptide. Cystine bridges form between Cys-28–Cys-55, Cys-35–Cys-49, and Cys-39–Cys-56.

This sequence belongs to the beta-defensin family.

It localises to the secreted. In terms of biological role, has antibacterial activity. The polypeptide is Beta-defensin 119 (DEFB119) (Gorilla gorilla gorilla (Western lowland gorilla)).